We begin with the raw amino-acid sequence, 347 residues long: Aspartate-semialdehyde dehydrogenase (347 aa).

Residues 10-13 and 37-38 contribute to the NADP(+) site; these read TGMV and RS. A phosphate-binding site is contributed by Arg-108. Cys-147 serves as the catalytic Acyl-thioester intermediate. Gln-174 provides a ligand contact to substrate. 177 to 178 contacts NADP(+); it reads SG. Glu-200 contributes to the substrate binding site. Residue Lys-203 participates in phosphate binding. Arg-233 serves as a coordination point for substrate. His-240 (proton acceptor) is an active-site residue. The disordered stretch occupies residues 276–299; that stretch reads APEKPVVVRDEENRPQPRMDRDMD. The segment covering 281-299 has biased composition (basic and acidic residues); it reads VVVRDEENRPQPRMDRDMD. 327–328 is a binding site for NADP(+); sequence NT.

Belongs to the aspartate-semialdehyde dehydrogenase family. In terms of assembly, homodimer.

The enzyme catalyses L-aspartate 4-semialdehyde + phosphate + NADP(+) = 4-phospho-L-aspartate + NADPH + H(+). It participates in amino-acid biosynthesis; L-lysine biosynthesis via DAP pathway; (S)-tetrahydrodipicolinate from L-aspartate: step 2/4. The protein operates within amino-acid biosynthesis; L-methionine biosynthesis via de novo pathway; L-homoserine from L-aspartate: step 2/3. It functions in the pathway amino-acid biosynthesis; L-threonine biosynthesis; L-threonine from L-aspartate: step 2/5. Its function is as follows. Catalyzes the NADPH-dependent formation of L-aspartate-semialdehyde (L-ASA) by the reductive dephosphorylation of L-aspartyl-4-phosphate. This is Aspartate-semialdehyde dehydrogenase from Methanothermobacter thermautotrophicus (strain ATCC 29096 / DSM 1053 / JCM 10044 / NBRC 100330 / Delta H) (Methanobacterium thermoautotrophicum).